Reading from the N-terminus, the 291-residue chain is 29 kDa ribonucleoprotein B, chloroplastic (291 aa).

In terms of domain architecture, RRM 1 spans Leu87–Ala165. Residues Pro164 to Ser202 are disordered. Positions Pro166–Ser206 are linker (Gly-rich). The segment covering Phe174–Asp189 has biased composition (gly residues). The region spanning Asn207–Glu285 is the RRM 2 domain.

The protein resides in the plastid. Its subcellular location is the chloroplast. Could be involved in splicing and/or processing of chloroplast RNA's. This is 29 kDa ribonucleoprotein B, chloroplastic from Nicotiana sylvestris (Wood tobacco).